Here is a 219-residue protein sequence, read N- to C-terminus: Maleylacetoacetate isomerase (219 aa).

The GST N-terminal domain maps to 4 to 87 (NKTVLYSYWR…YLEETHPENP (84 aa)). Glutathione is bound by residues 14-19 (SSCSWR), Q45, 71-72 (QS), Q111, and 115-117 (NLK). In terms of domain architecture, GST C-terminal spans 92–217 (GSYERAIARQ…LPQNQPDAEP (126 aa)).

Belongs to the GST superfamily. Zeta family. The cofactor is glutathione.

It catalyses the reaction 4-maleylacetoacetate = 4-fumarylacetoacetate. It functions in the pathway amino-acid degradation; L-phenylalanine degradation; acetoacetate and fumarate from L-phenylalanine: step 5/6. In Dictyostelium discoideum (Social amoeba), this protein is Maleylacetoacetate isomerase (mai).